Here is a 529-residue protein sequence, read N- to C-terminus: Bifunctional purine biosynthesis protein PurH (529 aa).

The MGS-like domain occupies 1 to 148 (MQQRRPVRRA…KNHKDVAIVV (148 aa)). An N6-acetyllysine modification is found at Lys287.

The protein belongs to the PurH family.

It catalyses the reaction (6R)-10-formyltetrahydrofolate + 5-amino-1-(5-phospho-beta-D-ribosyl)imidazole-4-carboxamide = 5-formamido-1-(5-phospho-D-ribosyl)imidazole-4-carboxamide + (6S)-5,6,7,8-tetrahydrofolate. It carries out the reaction IMP + H2O = 5-formamido-1-(5-phospho-D-ribosyl)imidazole-4-carboxamide. The protein operates within purine metabolism; IMP biosynthesis via de novo pathway; 5-formamido-1-(5-phospho-D-ribosyl)imidazole-4-carboxamide from 5-amino-1-(5-phospho-D-ribosyl)imidazole-4-carboxamide (10-formyl THF route): step 1/1. It functions in the pathway purine metabolism; IMP biosynthesis via de novo pathway; IMP from 5-formamido-1-(5-phospho-D-ribosyl)imidazole-4-carboxamide: step 1/1. The polypeptide is Bifunctional purine biosynthesis protein PurH (Escherichia coli O45:K1 (strain S88 / ExPEC)).